A 305-amino-acid chain; its full sequence is Oxygen-dependent coproporphyrinogen-III oxidase (305 aa).

Substrate is bound at residue S98. A divalent metal cation is bound by residues H102 and H112. Residue H112 is the Proton donor of the active site. 114-116 (NVR) provides a ligand contact to substrate. A divalent metal cation-binding residues include H151 and H181. The segment at 246 to 281 (YVEFNLVYDRGTLFGLQSGGRTESILMSMPPLARWE) is important for dimerization. Substrate is bound at residue 264–266 (GGR).

Belongs to the aerobic coproporphyrinogen-III oxidase family. Homodimer. Requires a divalent metal cation as cofactor.

The protein resides in the cytoplasm. It catalyses the reaction coproporphyrinogen III + O2 + 2 H(+) = protoporphyrinogen IX + 2 CO2 + 2 H2O. Its pathway is porphyrin-containing compound metabolism; protoporphyrin-IX biosynthesis; protoporphyrinogen-IX from coproporphyrinogen-III (O2 route): step 1/1. Involved in the heme biosynthesis. Catalyzes the aerobic oxidative decarboxylation of propionate groups of rings A and B of coproporphyrinogen-III to yield the vinyl groups in protoporphyrinogen-IX. In Vibrio campbellii (strain ATCC BAA-1116), this protein is Oxygen-dependent coproporphyrinogen-III oxidase.